The following is a 464-amino-acid chain: Cell division protein FtsA (464 aa).

The interval 392-464 (EVIESDKDSE…FKKLMKSLFE (73 aa)) is disordered. The segment covering 416–455 (KKENDEVAPEAPREESYEDRENHLEDEQQTEGKAKEESKF) has biased composition (basic and acidic residues).

This sequence belongs to the FtsA/MreB family. Self-interacts. Interacts with FtsZ.

The protein resides in the cell membrane. Functionally, cell division protein that is involved in the assembly of the Z ring. May serve as a membrane anchor for the Z ring. This Staphylococcus epidermidis (strain ATCC 35984 / DSM 28319 / BCRC 17069 / CCUG 31568 / BM 3577 / RP62A) protein is Cell division protein FtsA.